The primary structure comprises 539 residues: Phenylalanine--tRNA ligase beta subunit (539 aa).

A B5 domain is found at 271–347; the sequence is LSPARWTVTT…KSYGYENLKA (77 aa). Mg(2+) is bound by residues Asp325, Asp331, Glu334, and Asp335.

The protein belongs to the phenylalanyl-tRNA synthetase beta subunit family. Type 2 subfamily. In terms of assembly, tetramer of two alpha and two beta subunits. Mg(2+) is required as a cofactor.

The protein resides in the cytoplasm. The catalysed reaction is tRNA(Phe) + L-phenylalanine + ATP = L-phenylalanyl-tRNA(Phe) + AMP + diphosphate + H(+). The chain is Phenylalanine--tRNA ligase beta subunit from Methanothrix thermoacetophila (strain DSM 6194 / JCM 14653 / NBRC 101360 / PT) (Methanosaeta thermophila).